The following is a 125-amino-acid chain: Protein ApaG (125 aa).

The ApaG domain maps to 1–125 (MINSPRVCIQ…FRLAVPTLIH (125 aa)).

The sequence is that of Protein ApaG from Escherichia coli (strain SE11).